Here is a 163-residue protein sequence, read N- to C-terminus: NADH-quinone oxidoreductase subunit I (163 aa).

2 4Fe-4S ferredoxin-type domains span residues 54 to 84 (LRRYPNGEERCIACKLCEAVCPALAITIDSA) and 94 to 123 (TRYDIDLFKCIFCGFCEESCPVDSIVETHI). [4Fe-4S] cluster is bound by residues C64, C67, C70, C74, C103, C106, C109, and C113.

Belongs to the complex I 23 kDa subunit family. As to quaternary structure, NDH-1 is composed of 14 different subunits. Subunits NuoA, H, J, K, L, M, N constitute the membrane sector of the complex. [4Fe-4S] cluster serves as cofactor.

Its subcellular location is the cell inner membrane. The catalysed reaction is a quinone + NADH + 5 H(+)(in) = a quinol + NAD(+) + 4 H(+)(out). Functionally, NDH-1 shuttles electrons from NADH, via FMN and iron-sulfur (Fe-S) centers, to quinones in the respiratory chain. The immediate electron acceptor for the enzyme in this species is believed to be ubiquinone. Couples the redox reaction to proton translocation (for every two electrons transferred, four hydrogen ions are translocated across the cytoplasmic membrane), and thus conserves the redox energy in a proton gradient. In Xanthomonas campestris pv. campestris (strain 8004), this protein is NADH-quinone oxidoreductase subunit I.